The primary structure comprises 127 residues: Ribonuclease P protein component 1 (127 aa).

This sequence belongs to the eukaryotic/archaeal RNase P protein component 1 family. As to quaternary structure, consists of a catalytic RNA component and at least 4 protein subunits. Forms a subcomplex with Rnp4 which stimulates the catalytic RNA.

Its subcellular location is the cytoplasm. The enzyme catalyses Endonucleolytic cleavage of RNA, removing 5'-extranucleotides from tRNA precursor.. In terms of biological role, part of ribonuclease P, a protein complex that generates mature tRNA molecules by cleaving their 5'-ends. The RNA is catalytic, but its KM for pre-tRNA is 170-fold decreased in the presence of the 4 known protein subunits (Rnp1-4). The protein subunits also decrease the amount of Mg(2+) needed for activity. The polypeptide is Ribonuclease P protein component 1 (Pyrococcus furiosus (strain ATCC 43587 / DSM 3638 / JCM 8422 / Vc1)).